The primary structure comprises 793 residues: ATP-dependent RNA helicase DRS1 (793 aa).

A disordered region spans residues 1–208; the sequence is MADDFITTID…TTTDPTLPSS (208 aa). Positions 75-89 are enriched in basic residues; sequence KRGKPIRAFKDRKRK. Composition is skewed to acidic residues over residues 94 to 114, 122 to 144, and 152 to 184; these read ATSE…NDDS, SEED…ENEI, and ESDE…EETA. Residues 193–208 show a composition bias toward low complexity; sequence FFSSDPTTTDPTLPSS. A Q motif motif is present at residues 207 to 235; that stretch reads SSFTAMNLSRPLLRALTSLQFTAPTPIQA. The Helicase ATP-binding domain occupies 238–416; that stretch reads IPLALLGRDI…KLSLDKPIRV (179 aa). 251-258 contributes to the ATP binding site; sequence AVTGSGKT. The DEAD box motif lies at 364-367; sequence DEAD. One can recognise a Helicase C-terminal domain in the interval 427–606; it reads GLTQEFVRIR…EFKDDIQEIL (180 aa). A coiled-coil region spans residues 560–630; it reads EADRKMLKAA…EIKKGQNMVE (71 aa). The segment at 645-793 is disordered; it reads QSGKEKQASK…KKGGKGKGRK (149 aa). Basic and acidic residues-rich tracts occupy residues 671 to 688 and 726 to 740; these read SAEK…DGLS and KITE…AGKG. A compositionally biased stretch (basic residues) spans 741–752; sequence KDKKKGKARRVT. The span at 761–771 shows a compositional bias: basic and acidic residues; it reads SEGKKSHEGMR. Positions 782-793 are enriched in basic residues; the sequence is GKKKGGKGKGRK.

This sequence belongs to the DEAD box helicase family. DDX27/DRS1 subfamily. Associates with pre-ribosomal particles.

Its subcellular location is the nucleus. The protein resides in the nucleolus. It catalyses the reaction ATP + H2O = ADP + phosphate + H(+). Functionally, ATP-binding RNA helicase involved in ribosome assembly. This Cryptococcus neoformans var. neoformans serotype D (strain JEC21 / ATCC MYA-565) (Filobasidiella neoformans) protein is ATP-dependent RNA helicase DRS1 (DRS1).